The sequence spans 459 residues: Serine--tRNA ligase (459 aa).

254–256 (TAE) is a binding site for L-serine. ATP-binding positions include 285 to 287 (RKE) and V301. Position 308 (E308) interacts with L-serine. 372–375 (EMVS) contributes to the ATP binding site. T408 contributes to the L-serine binding site.

Belongs to the class-II aminoacyl-tRNA synthetase family. Type-1 seryl-tRNA synthetase subfamily. Homodimer. The tRNA molecule binds across the dimer.

It is found in the cytoplasm. It catalyses the reaction tRNA(Ser) + L-serine + ATP = L-seryl-tRNA(Ser) + AMP + diphosphate + H(+). The catalysed reaction is tRNA(Sec) + L-serine + ATP = L-seryl-tRNA(Sec) + AMP + diphosphate + H(+). It functions in the pathway aminoacyl-tRNA biosynthesis; selenocysteinyl-tRNA(Sec) biosynthesis; L-seryl-tRNA(Sec) from L-serine and tRNA(Sec): step 1/1. In terms of biological role, catalyzes the attachment of serine to tRNA(Ser). Is also able to aminoacylate tRNA(Sec) with serine, to form the misacylated tRNA L-seryl-tRNA(Sec), which will be further converted into selenocysteinyl-tRNA(Sec). The polypeptide is Serine--tRNA ligase (Desulfurococcus amylolyticus (strain DSM 18924 / JCM 16383 / VKM B-2413 / 1221n) (Desulfurococcus kamchatkensis)).